The sequence spans 156 residues: C-type lectin lectoxin-Lei1 (156 aa).

The first 23 residues, 1–23 (MRRFLFLSLGVLVVAFSLNGIGA), serve as a signal peptide directing secretion. Cystine bridges form between C27–C38, C55–C154, and C129–C146. Residues 34 to 155 (FDRFCYKVIK…CESRNIFICK (122 aa)) form the C-type lectin domain. 2 N-linked (GlcNAc...) asparagine glycosylation sites follow: N60 and N99. The Sugar-binding signature appears at 119–121 (KRN). N142 contributes to the Ca(2+) binding site.

It belongs to the true venom lectin family. As to expression, expressed by the venom gland.

The protein resides in the secreted. Its function is as follows. Lectin which recognizes specific carbohydrate structures and agglutinates a variety of animal cells by binding to cell-surface glycoproteins and glycolipids. May be a calcium-dependent lectin. This is C-type lectin lectoxin-Lei1 from Leioheterodon madagascariensis (Malagasy giant hognose snake).